Here is a 255-residue protein sequence, read N- to C-terminus: F-box/SPRY domain-containing protein 1 (255 aa).

An F-box domain is found at 3–51 (DPVAALCNYNVLEVIFSYLELEDLNHCSQVCKSWYHFLNDENSDVWRWH). Residues 61 to 253 (LKSDLLASVS…VSMVYLGTPL (193 aa)) form the B30.2/SPRY domain.

It belongs to the FBXO45/Fsn family. As to quaternary structure, component of an E3 ubiquitin ligase complex composed of hiw and Fsn.

The protein resides in the synapse. It participates in protein modification; protein ubiquitination. Required in the presynaptic motoneuron to down-regulate the levels of wnd and restrain synaptic terminal growth at the neuromuscular junction (NMJ). The sequence is that of F-box/SPRY domain-containing protein 1 from Drosophila yakuba (Fruit fly).